A 443-amino-acid polypeptide reads, in one-letter code: Xaa-Pro dipeptidase (443 aa).

Residues Asp246, Asp257, His339, Glu384, and Glu423 each contribute to the Mn(2+) site.

The protein belongs to the peptidase M24B family. Bacterial-type prolidase subfamily. Mn(2+) is required as a cofactor.

The enzyme catalyses Xaa-L-Pro dipeptide + H2O = an L-alpha-amino acid + L-proline. Its function is as follows. Splits dipeptides with a prolyl residue in the C-terminal position. This Cronobacter sakazakii (strain ATCC BAA-894) (Enterobacter sakazakii) protein is Xaa-Pro dipeptidase.